The primary structure comprises 364 residues: Glycerophosphodiester phosphodiesterase (364 aa).

Residues 1–18 (MKLKTLALSLLAAGVLAG) form the signal peptide. The N-palmitoyl cysteine moiety is linked to residue Cys-19. Cys-19 is lipidated: S-diacylglycerol cysteine. One can recognise a GP-PDE domain in the interval 35 to 360 (KIIIAHRGAS…DFPDTGVEFL (326 aa)). His-40 serves as the catalytic Proton acceptor. Ca(2+) contacts are provided by Glu-67 and Asp-69. His-82 functions as the Proton donor in the catalytic mechanism. Glu-175 contributes to the Ca(2+) binding site.

This sequence belongs to the glycerophosphoryl diester phosphodiesterase family. It depends on Ca(2+) as a cofactor. Contains both ester- and amide-linked fatty acids.

It is found in the cell outer membrane. It catalyses the reaction a sn-glycero-3-phosphodiester + H2O = an alcohol + sn-glycerol 3-phosphate + H(+). Glycerophosphodiester phosphodiesterase hydrolyzes glycerophosphodiesters into glycerol-3-phosphate (G3P) and the corresponding alcohol. Has a specific affinity for human immunoglobulin D myeloma protein. This Haemophilus influenzae (strain ATCC 51907 / DSM 11121 / KW20 / Rd) protein is Glycerophosphodiester phosphodiesterase (glpQ).